A 419-amino-acid chain; its full sequence is UDP-N-acetylglucosamine 1-carboxyvinyltransferase (419 aa).

22 to 23 contributes to the phosphoenolpyruvate binding site; sequence KN. Arg-91 serves as a coordination point for UDP-N-acetyl-alpha-D-glucosamine. Cys-115 serves as the catalytic Proton donor. Position 115 is a 2-(S-cysteinyl)pyruvic acid O-phosphothioketal (Cys-115). Residues 120 to 124, 160 to 163, Asp-305, and Val-327 each bind UDP-N-acetyl-alpha-D-glucosamine; these read RPVDL and KVSV.

It belongs to the EPSP synthase family. MurA subfamily.

It is found in the cytoplasm. It carries out the reaction phosphoenolpyruvate + UDP-N-acetyl-alpha-D-glucosamine = UDP-N-acetyl-3-O-(1-carboxyvinyl)-alpha-D-glucosamine + phosphate. The protein operates within cell wall biogenesis; peptidoglycan biosynthesis. Functionally, cell wall formation. Adds enolpyruvyl to UDP-N-acetylglucosamine. This chain is UDP-N-acetylglucosamine 1-carboxyvinyltransferase, found in Salmonella agona (strain SL483).